We begin with the raw amino-acid sequence, 943 residues long: Translation initiation factor IF-2 (943 aa).

Disordered stretches follow at residues phenylalanine 96–arginine 229 and alanine 243–glutamine 352. Residues aspartate 104–alanine 116 show a composition bias toward low complexity. 2 stretches are compositionally biased toward basic and acidic residues: residues glutamate 120–alanine 163 and alanine 171–arginine 229. The span at alanine 278–proline 293 shows a compositional bias: low complexity. The span at threonine 313–glycine 323 shows a compositional bias: basic and acidic residues. A tr-type G domain is found at serine 443–lysine 612. The segment at glycine 452–threonine 459 is G1. Residue glycine 452–threonine 459 participates in GTP binding. A G2 region spans residues glycine 477–histidine 481. Residues aspartate 498 to glycine 501 are G3. GTP contacts are provided by residues aspartate 498 to histidine 502 and threonine 552 to aspartate 555. Residues threonine 552–aspartate 555 form a G4 region. Residues serine 588–lysine 590 are G5.

This sequence belongs to the TRAFAC class translation factor GTPase superfamily. Classic translation factor GTPase family. IF-2 subfamily.

The protein localises to the cytoplasm. One of the essential components for the initiation of protein synthesis. Protects formylmethionyl-tRNA from spontaneous hydrolysis and promotes its binding to the 30S ribosomal subunits. Also involved in the hydrolysis of GTP during the formation of the 70S ribosomal complex. The chain is Translation initiation factor IF-2 from Acidovorax sp. (strain JS42).